The sequence spans 696 residues: MLLGALRMEERKGLMGRERDQFPVGMRVLAVDDDPVCLKVLETLLRRCQYHVTSTNQAITALKLLRENRDMFDLVISDVHMPDMDGFKLLELVGLEMDLPVIMLSVNGETKTVMKGITHGACDYLLKPVRIEELRNIWQHVVRRKFGNRERNNLDFSKECNKPQSADTDHGPYQPTCGSSDQNGRSSRKRKELHGEDDDEGDDNDYQENDEPSAAKKPRVVWSVELHRKFVAAVNQLGIDKAVPKRILELMNVEKLTRENVASHLQKYRLYLKRLGAVASQQASIVAAFGGRDPSFLHIGAFEGLQSYQPFAPSAALPSFNPHGLLTRTSAAAAFGLQELAAPSSTIQTSTGNVTVGHCLEENQQANLAQGLTAAIGQPQLQQNWIHQEGNGLSDVFSGSSLTNTLSSTLQRVPSSSLPPQELLECKQAKVSMPPSIRIPPSSSALLERTLGVSTNLGDSSISQQGALPIDGGFSADRLPLHSSFDGAVATKLDTSLAASQREIGQQGKFSVSMLVSPSDNLALAKNAKTGASSSGSTIILPLDTARHSDYLQFGGASNSLQKMDGQKQDHIQSSNIIWSSMPSTQLPSDTQIHNTQNQRLDSGSFNHNIGAHLADQTNASASILPQMKFDTRISEEKMKQKNTYDLGSSKLQGGFNSSGCNFDGLLNSIIKVEKDDLPFMDNELGCDLFPLGACI.

The Response regulatory domain maps to 27 to 142 (RVLAVDDDPV…ELRNIWQHVV (116 aa)). 4-aspartylphosphate is present on aspartate 78. Residues 154-214 (LDFSKECNKP…DYQENDEPSA (61 aa)) form a disordered region. Residues 176 to 185 (TCGSSDQNGR) show a composition bias toward polar residues. The segment covering 195–211 (GEDDDEGDDNDYQENDE) has biased composition (acidic residues). The segment at residues 214–273 (AAKKPRVVWSVELHRKFVAAVNQLGIDKAVPKRILELMNVEKLTRENVASHLQKYRLYLK) is a DNA-binding region (myb-like GARP).

This sequence belongs to the ARR family. Type-B subfamily. Two-component system major event consists of a His-to-Asp phosphorelay between a sensor histidine kinase (HK) and a response regulator (RR). In plants, the His-to-Asp phosphorelay involves an additional intermediate named Histidine-containing phosphotransfer protein (HPt). This multistep phosphorelay consists of a His-Asp-His-Asp sequential transfer of a phosphate group between first a His and an Asp of the HK protein, followed by the transfer to a conserved His of the HPt protein and finally the transfer to an Asp in the receiver domain of the RR protein.

Its subcellular location is the nucleus. In terms of biological role, transcriptional activator that binds specific DNA sequence. Functions as a response regulator involved in His-to-Asp phosphorelay signal transduction system. Phosphorylation of the Asp residue in the receiver domain activates the ability of the protein to promote the transcription of target genes. May directly activate some type-A response regulators in response to cytokinins. Functions as a response regulator in response to cytokinins. The protein is Two-component response regulator ORR22 of Oryza sativa subsp. japonica (Rice).